We begin with the raw amino-acid sequence, 759 residues long: 1,4-alpha-glucan branching enzyme GlgB (759 aa).

Positions 1 to 21 (MAKTKGLPKDTAVTPSPHLRP) are disordered. Residue Asp422 is the Nucleophile of the active site. Glu475 acts as the Proton donor in catalysis.

It belongs to the glycosyl hydrolase 13 family. GlgB subfamily. Monomer.

The enzyme catalyses Transfers a segment of a (1-&gt;4)-alpha-D-glucan chain to a primary hydroxy group in a similar glucan chain.. It functions in the pathway glycan biosynthesis; glycogen biosynthesis. In terms of biological role, catalyzes the formation of the alpha-1,6-glucosidic linkages in glycogen by scission of a 1,4-alpha-linked oligosaccharide from growing alpha-1,4-glucan chains and the subsequent attachment of the oligosaccharide to the alpha-1,6 position. The sequence is that of 1,4-alpha-glucan branching enzyme GlgB from Mycobacterium sp. (strain JLS).